The primary structure comprises 312 residues: Olfactory receptor-like protein COR4 (312 aa).

Over 1-26 (MASGNCTTPTTFILSGLTDNPGLQMP) the chain is Extracellular. An N-linked (GlcNAc...) asparagine glycan is attached at N5. The chain crosses the membrane as a helical span at residues 27–49 (LFMVFLAIYTITLLTNLGLIALI). Over 50–57 (SVDLHLQT) the chain is Cytoplasmic. The chain crosses the membrane as a helical span at residues 58 to 79 (PMYIFLQNLSFTDAAYSTVITP). Topologically, residues 80–100 (KMLATFLEERKTISYIGCILQ) are extracellular. C97 and C179 are joined by a disulfide. The chain crosses the membrane as a helical span at residues 101 to 120 (YFSFVLLTVTESLLLAVMAY). The Cytoplasmic segment spans residues 121-139 (DRYVAICKPLLYPSIMTKA). A helical transmembrane segment spans residues 140–164 (VCWRLVKGLYSLAFLNSLVHTSGLL). Topologically, residues 165 to 205 (KLSFCSSNVVNHFFCDNSPLFQISSSSTTLNELLVFIFGSL) are extracellular. A helical membrane pass occupies residues 206 to 226 (FAMSSIITILISYVFIILTVV). Topologically, residues 227–239 (RIRSKDGKYKAFS) are cytoplasmic. The helical transmembrane segment at 240–260 (TCTSHLMAVSLFHGTVIFMYL) threads the bilayer. The Extracellular portion of the chain corresponds to 261 to 271 (RPVKLFSLDTD). A helical transmembrane segment spans residues 272 to 292 (KIASLFYTVVIPMLNPLIYSW). The Cytoplasmic portion of the chain corresponds to 293–312 (RNKEVKDALRRVIATNVWIH).

This sequence belongs to the G-protein coupled receptor 1 family.

Its subcellular location is the cell membrane. Odorant receptor. This chain is Olfactory receptor-like protein COR4 (COR4), found in Gallus gallus (Chicken).